The sequence spans 274 residues: Diaminopimelate epimerase (274 aa).

The substrate site is built by Asn11, Gln44, and Asn64. Cys73 (proton donor) is an active-site residue. Substrate-binding positions include Gly74 to Asn75, Asn157, Asn190, and Glu208 to Arg209. Residue Cys217 is the Proton acceptor of the active site. Gly218–Ser219 serves as a coordination point for substrate.

Belongs to the diaminopimelate epimerase family. In terms of assembly, homodimer.

The protein localises to the cytoplasm. It carries out the reaction (2S,6S)-2,6-diaminopimelate = meso-2,6-diaminopimelate. It functions in the pathway amino-acid biosynthesis; L-lysine biosynthesis via DAP pathway; DL-2,6-diaminopimelate from LL-2,6-diaminopimelate: step 1/1. Its function is as follows. Catalyzes the stereoinversion of LL-2,6-diaminopimelate (L,L-DAP) to meso-diaminopimelate (meso-DAP), a precursor of L-lysine and an essential component of the bacterial peptidoglycan. This Photorhabdus laumondii subsp. laumondii (strain DSM 15139 / CIP 105565 / TT01) (Photorhabdus luminescens subsp. laumondii) protein is Diaminopimelate epimerase.